The primary structure comprises 319 residues: RWD domain-containing protein 2B (319 aa).

The RWD domain occupies 41–165 (SELDLLASMF…EWVREHASGY (125 aa)). Serine 275 is subject to Phosphoserine.

This Pongo abelii (Sumatran orangutan) protein is RWD domain-containing protein 2B (RWDD2B).